The chain runs to 246 residues: Uridylate kinase (246 aa).

An ATP-binding site is contributed by Lys16 to Gly19. Gly57 lines the UMP pocket. ATP-binding residues include Gly58 and Arg62. Residues Asp77 and Met138–Thr145 contribute to the UMP site. Tyr171 and Asp174 together coordinate ATP.

It belongs to the UMP kinase family. As to quaternary structure, homohexamer.

It is found in the cytoplasm. The enzyme catalyses UMP + ATP = UDP + ADP. It participates in pyrimidine metabolism; CTP biosynthesis via de novo pathway; UDP from UMP (UMPK route): step 1/1. Its activity is regulated as follows. Inhibited by UTP. In terms of biological role, catalyzes the reversible phosphorylation of UMP to UDP. In Corynebacterium jeikeium (strain K411), this protein is Uridylate kinase.